Here is a 3131-residue protein sequence, read N- to C-terminus: Enniatin synthase (3131 aa).

Residues 53-466 (ADDKQRAVGH…VEKVDMMTQE (414 aa)) form a condensation 1 region. The segment at 186 to 212 (NDEHPRQFETPDSSQATPEEDLQPNPS) is disordered. The adenylation 1 stretch occupies residues 495-887 (SQSPNKAAVA…GRMDSQVKIR (393 aa)). A Carrier 1 domain is found at 1010-1086 (SSGTDTYTKL…GLKAIVIGTS (77 aa)). Serine 1047 carries the O-(pantetheine 4'-phosphoryl)serine modification. The interval 1105–1534 (SYAQNRMWFL…ETCISVLPLT (430 aa)) is condensation 2. An adenylation 2 region spans residues 1563 to 1960 (FREQAAANPE…GRMDNQFKIR (398 aa)). An S-adenosyl-L-methionine-dependent N-methyltransferase region spans residues 2021–2177 (EGWQDHFESG…YLAEVIDGLI (157 aa)). Carrier domains follow at residues 2504 to 2578 (FPIS…RQGL) and 2598 to 2671 (APRT…ESSH). Serine 2538 and serine 2632 each carry O-(pantetheine 4'-phosphoryl)serine. The condensation 3 stretch occupies residues 2718-3123 (QDVYPSTQMQ…RHVLEEVCKT (406 aa)).

This sequence belongs to the ATP-dependent AMP-binding enzyme family. Requires pantetheine 4'-phosphate as cofactor. The N-terminus is blocked.

Its pathway is antibiotic biosynthesis; enniatin biosynthesis. Its activity is regulated as follows. The N-methylation activity is inhibited by S-adenosyl-L-homocysteine and sinefugin. Nonribosomal peptide synthetase that synthesizes enniatin by coupling three D-hydroxycarboxylic acids and three L-amino acids via amide and ester bonds in an alternating fashion. Whereas ESYN1 can accept different amino acids as precursors (L -valine, L-isoleucine or L-leucine), only one species of D-hydroxycarboxylic acid can be found in natural enniatin isolates (D-hydroxyisovaleric acid, D-Hiv). D-Hiv stems from L-valine deanimation by a valine aminotransferase to 2-keto-isovaleric acid (2-Kiv), which becomes subsequently reduced by a keto-isovaleric acid reductase (KivR) to D-Hiv. Peptide bond formation and N-methylation of the amino acid occur before three enzyme-bound dipeptidols are condensed to a hexapeptidol. This chain is Enniatin synthase, found in Fusarium equiseti (Fusarium scirpi).